The primary structure comprises 494 residues: DnaJ-related protein rsp1 (494 aa).

The J domain maps to 12-78 (DYYTILGAES…KLRELFDQRR (67 aa)). Positions 229–242 (SEISNGLNSNGVEN) are enriched in polar residues. Residues 229 to 354 (SEISNGLNSN…NDSTSNSTEY (126 aa)) form a disordered region. Low complexity predominate over residues 243–256 (SSITKSSPRSSSSS). The span at 270-287 (IFTSPNTPEHPSVYQTDI) shows a compositional bias: polar residues. Over residues 321-331 (LSRSKSSSLSR) the composition is skewed to low complexity. Over residues 332-354 (NQTRSQLNDLSAENDSTSNSTEY) the composition is skewed to polar residues.

As to quaternary structure, interacts iwth ssa1.

It is found in the cytoplasm. It localises to the cytoskeleton. The protein resides in the nucleus. Functionally, has a role in the proper organization of the interphase microtubule cytoskeleton. Required for equatorial microtubule organizing center (eMTOC) disassembly into satellites, contributing to the dynamic redistribution of MTOC components for organization of interphase microtubules. In Schizosaccharomyces pombe (strain 972 / ATCC 24843) (Fission yeast), this protein is DnaJ-related protein rsp1 (rsp1).